We begin with the raw amino-acid sequence, 1026 residues long: MRFFALFIYRPVATILIAAAITLCGILGFRLLPVAPLPQVDFPVIMVSASLPGASPETMASSVATPLERSLGRIAGVNEMTSSSSLGSTRIILEFNFDRDINGAARDVQAAINAAQSLLPGGMPSRPTYRKANPSDAPIMILTLTSESWSQGKLYDFASTQLAQTIAQIDGVGDVDVGGSSLPAVRVGLNPQALFNQGVSLDEVREAIDSANVRRPQGAIEDSVHRWQIQTNDELKTAAEYQPLIIHYNNGAAVRLGDVASVTDSVQDVRNAGMTNAKPAILLMIRKLPEANIIQTVDGIRAKLPELRAMIPAAIDLQIAQDRSPTIRASLQEVEETLAISVALVILVVFLFLRSGRATLIPAVAVPVSLIGTFAAMYLCGFSLNNLSLMALTIATGFVVDDAIVVLENIARHLEAGMKPLQAALQGTREVGFTVISMSLSLVAVFLPLLLMGGLPGRLLREFAVTLSVAIGISLVVSLTLTPMMCGWMLKSSKPRTQPRKRGVGRLLVALQQGYGTSLKWVLNHTRLVGVVFLGTVALNIWLYIAIPKTFFPEQDTGVLMGGIQADQSISFQAMRGKLQDFMKIIRDDPAVNNVTGFTGGSRVNSGMMFITLKPRGERKETAQQIIDRLRVKLAKEPGARLFLMAVQDIRVGGRQANASYQYTLLSDSLPALREWEPKIRKALSALPQLADVNSDQQDNGAEMNLIYDRDTMSRLGIDVQAANSLLNNTFGQRQISTIYQPMNQYKVVMEVDPRYTQDISALEKMFVINRDGKAIPLSYFAQWRPANAPLSVNHQGLSAASTIAFNLPTGTSLSQATEAINRTMTQLGVPSTVRGSFSGTAQVFQQTMNSQLILIVAAIATVYIVLEILYESYVHPLTILSTLPSAGVGALLALELFNAPFSLIALIGIMLLIGIVKKNAIMMVDFALEAQRSGGLTPEQAIFQACLLRFRPIMMTTLAALFGALPLVLSGGDGSELRQPLGITIVGGLVMSQLLTLYTTPVVYLFFDRLRLRFSRKNSKPVVEI.

11 helical membrane-spanning segments follow: residues 15–35 (ILIA…LPVA), 333–353 (EVEE…FLFL), 360–380 (LIPA…MYLC), 387–407 (LSLM…IVVL), 431–451 (VGFT…PLLL), 463–483 (FAVT…TLTP), 528–548 (LVGV…IAIP), 853–873 (LILI…LYES), 897–917 (LFNA…IGIV), 953–973 (PIMM…LSGG), and 984–1004 (ITIV…TPVV).

Belongs to the resistance-nodulation-cell division (RND) (TC 2.A.6) family. MdtC subfamily. As to quaternary structure, part of a tripartite efflux system composed of MdtA, MdtB and MdtC. MdtC forms a heteromultimer with MdtB.

It localises to the cell inner membrane. This Salmonella paratyphi A (strain AKU_12601) protein is Multidrug resistance protein MdtC.